Consider the following 445-residue polypeptide: Argininosuccinate synthase (445 aa).

Residues 17 to 25 (AFSGGLDTS) and alanine 43 each bind ATP. Tyrosine 99 contributes to the L-citrulline binding site. ATP contacts are provided by glycine 129 and threonine 131. L-aspartate-binding residues include threonine 131, asparagine 135, and aspartate 136. Asparagine 135 is an L-citrulline binding site. Aspartate 136 is a binding site for ATP. Positions 139 and 192 each coordinate L-citrulline. An ATP-binding site is contributed by aspartate 194. Residues threonine 201, glutamate 203, and glutamate 280 each contribute to the L-citrulline site.

Belongs to the argininosuccinate synthase family. Type 2 subfamily. As to quaternary structure, homotetramer.

Its subcellular location is the cytoplasm. The enzyme catalyses L-citrulline + L-aspartate + ATP = 2-(N(omega)-L-arginino)succinate + AMP + diphosphate + H(+). It participates in amino-acid biosynthesis; L-arginine biosynthesis; L-arginine from L-ornithine and carbamoyl phosphate: step 2/3. The polypeptide is Argininosuccinate synthase (Bordetella petrii (strain ATCC BAA-461 / DSM 12804 / CCUG 43448)).